A 201-amino-acid polypeptide reads, in one-letter code: MALKDLFSGFFVVEEEDDELEAPPEENEQQERQQPKQQAQSQNQFTEQPRNVNSERPRSIQSVPKKQSTRLQQSSGERKYQMNNTTSKNNARNVVNMNNQEQENYDFTQESSKMCLFEPRVFSDTQDIADELKNRRATLVNLQRIDKVSAKRIIDFLSGTVYAIGGDIQRVGSDIFLCTPDNVEVAGSITDQIENMEYQGE.

The tract at residues Met1–Val94 is disordered. The segment covering Val13–Glu28 has biased composition (acidic residues). Over residues Pro35–Gln44 the composition is skewed to low complexity. Polar residues predominate over residues Ser59 to Lys88.

This sequence belongs to the SepF family. As to quaternary structure, homodimer. Interacts with FtsZ.

Its subcellular location is the cytoplasm. Functionally, cell division protein that is part of the divisome complex and is recruited early to the Z-ring. Probably stimulates Z-ring formation, perhaps through the cross-linking of FtsZ protofilaments. Its function overlaps with FtsA. In Staphylococcus saprophyticus subsp. saprophyticus (strain ATCC 15305 / DSM 20229 / NCIMB 8711 / NCTC 7292 / S-41), this protein is Cell division protein SepF.